Reading from the N-terminus, the 1203-residue chain is MEDCCDPLLATDASPRPESFSRSEKDIASRSRTVAMADLDSNCELSNDVDMEQSSPDLMKLEQSSDPVALDGKVVLGFSLASPDLVNCGASPDLPRGSYEDSPEFSKKRRFSTELSLENGIDGSTTTTRLGRKSQVVKFSAICQTFGYELSPESSFELPSPPGDFRESMTPVISINSGSISTDVTVEDVTFLKDEFFSGGESITTDAVVGNEDEILLYQTARLGNFAYKFQSLDPGDYFIDLHFAEIEFTKGPPGVISGLDLFSQVGANTPLVIEDLRMLVGREGELSIRLEGVTGAAILCGISIRKETTATYVEETGMLAVKGSTDTVLSQQTQENLVCRAEEEAEGMRSDCEQQRKEMEDMKRMVEELKLENQQKTRECEEALNSLSEIQNELMRKSMHVGSLAFAVEGQVKEKSRWFSSLRDLTRKLKIMKVEQIKLLEEATTYKHLVQDINEFSSHIQSRVKQDAELHENLKVKFVAGEKERKELYNKILELKGNIRVFCRCRPLNFEETEAGVSMGIDVESTKNGEVIVMSNGFPKKSFKFDSVFGPNASQADVFEDTAPFATSVIDGYNVCIFAYGQTGTGKTFTMEGTQHDRGVNYRTLENLFRIIKAREHRYNYEISVSVLEVYNEQIRDLLVPASQSASAPKRFEIRQLSEGNHHVPGLVEAPVKSIEEVWDVLKTGSNARAVGKTTANEHSSRSHCIHCVMVKGENLLNGECTKSKLWLVDLAGSERVAKTEVQGERLKETQNINKSLSALGDVIFALANKSSHIPFRNSKLTHLLQDSLGGDSKTLMFVQISPNENDQSETLCSLNFASRVRGIELGPAKKQLDNTELLKYKQMVEKWKQDMKGKDEQIRKMEETMYGLEAKIKERDTKNKTLQDKVKELESQLLVERKLARQHVDTKIAEQQTKQQTEDENNTSKRPPLTNILLGSASKEMVNLTRPSLLESTTSYDLAPLPSGVPKYNDLSEKENNPEMADQVHLPNKTGRFSICAKRIPSAPAPRRSSLAPTTSTSREMVYLTRPPLSESTTSYDLPPLPNGGLKYSDLIEKVNNQEMAEQVQIPKRIGAGRSSICAKRIPPAPRRKSFAPMPFIPITSTLTSPDEKSGANQVLCTSPKLHRSNGKTLTSILRRSIQKRMQMKPSPRQQPMRRGGGINVGMERVRLSIGNRGRLAHRVLLTNARKAGLKETPQKQERWI.

Residues 1–28 (MEDCCDPLLATDASPRPESFSRSEKDIA) form a disordered region. Over residues 19 to 28 (SFSRSEKDIA) the composition is skewed to basic and acidic residues. Residues 336–395 (ENLVCRAEEEAEGMRSDCEQQRKEMEDMKRMVEELKLENQQKTRECEEALNSLSEIQNEL) adopt a coiled-coil conformation. The Kinesin motor domain occupies 499–825 (NIRVFCRCRP…LNFASRVRGI (327 aa)). 582–589 (GQTGTGKT) serves as a coordination point for ATP. A coiled-coil region spans residues 846–901 (VEKWKQDMKGKDEQIRKMEETMYGLEAKIKERDTKNKTLQDKVKELESQLLVERKL). The interval 907 to 931 (DTKIAEQQTKQQTEDENNTSKRPPL) is disordered.

This sequence belongs to the TRAFAC class myosin-kinesin ATPase superfamily. Kinesin family. KIN-14 subfamily.

This chain is Kinesin-like protein KIN-14Q, found in Arabidopsis thaliana (Mouse-ear cress).